A 636-amino-acid chain; its full sequence is Molybdenum cofactor biosynthesis protein 1 (636 aa).

The segment at Met-1–Ile-383 is molybdenum cofactor biosynthesis protein A. Residue Ser-64 is modified to Phosphoserine. A Radical SAM core domain is found at Ser-64–Glu-277. Arg-73 contacts GTP. The [4Fe-4S] cluster site is built by Cys-80 and Cys-84. Tyr-86 is an S-adenosyl-L-methionine binding site. Cys-87 is a binding site for [4Fe-4S] cluster. Arg-123 is a binding site for GTP. Gly-127 contacts S-adenosyl-L-methionine. Thr-154 provides a ligand contact to GTP. Position 178 (Ser-178) interacts with S-adenosyl-L-methionine. Lys-198 is modified (N6-acetyllysine). A GTP-binding site is contributed by Lys-215. Met-249 is a binding site for S-adenosyl-L-methionine. [4Fe-4S] cluster-binding residues include Cys-312 and Cys-315. Arg-317 to Arg-319 serves as a coordination point for GTP. Residue Cys-329 participates in [4Fe-4S] cluster binding. Positions Met-414–Ala-636 are molybdenum cofactor biosynthesis protein C. A disordered region spans residues Asp-456–Glu-480. Residues Ser-463–Pro-475 are compositionally biased toward low complexity. Position 528 is an N6-acetyllysine (Lys-528). The active-site For molybdenum cofactor biosynthesis protein C activity is the Asp-606.

In the C-terminal section; belongs to the MoaC family. This sequence in the N-terminal section; belongs to the radical SAM superfamily. MoaA family. In terms of assembly, isoform MOCS1A and isoform MOCS1B probably form a heterooligomer. It depends on [4Fe-4S] cluster as a cofactor. In terms of tissue distribution, isoform MOCS1A and isoform 2 are widely expressed.

The catalysed reaction is GTP + AH2 + S-adenosyl-L-methionine = (8S)-3',8-cyclo-7,8-dihydroguanosine 5'-triphosphate + 5'-deoxyadenosine + L-methionine + A + H(+). The enzyme catalyses (8S)-3',8-cyclo-7,8-dihydroguanosine 5'-triphosphate = cyclic pyranopterin phosphate + diphosphate. It participates in cofactor biosynthesis; molybdopterin biosynthesis. Isoform MOCS1A and isoform MOCS1B probably form a complex that catalyzes the conversion of 5'-GTP to cyclic pyranopterin monophosphate (cPMP). MOCS1A catalyzes the cyclization of GTP to (8S)-3',8-cyclo-7,8-dihydroguanosine 5'-triphosphate and MOCS1B catalyzes the subsequent conversion of (8S)-3',8-cyclo-7,8-dihydroguanosine 5'-triphosphate to cPMP. The sequence is that of Molybdenum cofactor biosynthesis protein 1 (MOCS1) from Homo sapiens (Human).